The chain runs to 427 residues: NADPH-dependent stearoyl-CoA 9-desaturase (427 aa).

Residues histidine 90, histidine 94, histidine 125, histidine 129, histidine 130, histidine 304, histidine 308, and histidine 309 each coordinate Fe cation.

It belongs to the fatty acid desaturase type 1 family. As to quaternary structure, interacts with the electron transfer protein Rv3230c to form a functional acyl-CoA desaturase complex. It depends on Fe(2+) as a cofactor. Post-translationally, is rapidly degraded by a mycobacterial protein degradation system that specifically targets the residues LAA at the C-terminus, leading to a post-translational proteolytic regulation of DesA3 essential activity.

Its subcellular location is the cell membrane. The enzyme catalyses octadecanoyl-CoA + NADPH + O2 + H(+) = (9Z)-octadecenoyl-CoA + NADP(+) + 2 H2O. Its pathway is lipid metabolism; fatty acid metabolism. Is likely involved in the aerobic desaturation system responsible for the synthesis of oleic acid from stearoyl-CoA; oleic acid is a precursor of mycobacterial membrane phospholipids and triglycerides. Catalyzes the conversion of stearoyl-CoA to oleoyl-CoA by introduction of a cis double bond between carbons 9 and 10 of the acyl chain. Requires the electron transfer partner Rv3230c to pass two electrons from NADPH to its active site diiron center. Is also able to catalyze the 9-desaturation of palmitoyl-CoA to palmitoleoyl-CoA. In Mycobacterium tuberculosis (strain CDC 1551 / Oshkosh), this protein is NADPH-dependent stearoyl-CoA 9-desaturase (desA3).